The following is a 597-amino-acid chain: Proteasome-associated ATPase (597 aa).

Residues 1–12 show a composition bias toward basic and acidic residues; it reads MQHDRPGSRPEE. Positions 1 to 22 are disordered; that stretch reads MQHDRPGSRPEEGGEQQIGGDA. A coiled-coil region spans residues 21 to 97; that stretch reads DAELNSQIRL…REEVDRLAQP (77 aa). Residue 284 to 289 coordinates ATP; the sequence is GCGKTL. Residues 596 to 597 are docks into pockets in the proteasome alpha-ring; it reads YL.

It belongs to the AAA ATPase family. Homohexamer. Assembles into a hexameric ring structure that caps the 20S proteasome core. Strongly interacts with the prokaryotic ubiquitin-like protein Pup through a hydrophobic interface; the interacting region of ARC lies in its N-terminal coiled-coil domain. There is one Pup binding site per ARC hexamer ring. Upon ATP-binding, the C-terminus of ARC interacts with the alpha-rings of the proteasome core, possibly by binding to the intersubunit pockets.

Its pathway is protein degradation; proteasomal Pup-dependent pathway. ATPase which is responsible for recognizing, binding, unfolding and translocation of pupylated proteins into the bacterial 20S proteasome core particle. May be essential for opening the gate of the 20S proteasome via an interaction with its C-terminus, thereby allowing substrate entry and access to the site of proteolysis. Thus, the C-termini of the proteasomal ATPase may function like a 'key in a lock' to induce gate opening and therefore regulate proteolysis. The sequence is that of Proteasome-associated ATPase from Saccharopolyspora erythraea (strain ATCC 11635 / DSM 40517 / JCM 4748 / NBRC 13426 / NCIMB 8594 / NRRL 2338).